Reading from the N-terminus, the 180-residue chain is Bifunctional protein PyrR (180 aa).

Positions 101–113 (VVLVDDVIFKGRT) match the PRPP-binding motif.

This sequence belongs to the purine/pyrimidine phosphoribosyltransferase family. PyrR subfamily.

It catalyses the reaction UMP + diphosphate = 5-phospho-alpha-D-ribose 1-diphosphate + uracil. Regulates the transcription of the pyrimidine nucleotide (pyr) operon in response to exogenous pyrimidines. Functionally, also displays a weak uracil phosphoribosyltransferase activity which is not physiologically significant. The polypeptide is Bifunctional protein PyrR (Trichormus variabilis (strain ATCC 29413 / PCC 7937) (Anabaena variabilis)).